A 193-amino-acid chain; its full sequence is Adenylate kinase (193 aa).

10–15 is a binding site for ATP; the sequence is GAGKGT. Positions 30 to 59 are NMP; it reads STGDMLRAAVKAGTPIGLKAKAVMDAGGLV. AMP contacts are provided by residues T31, R36, 57–59, 85–88, and Q92; these read GLV and GFPR. An LID region spans residues 126–142; sequence KRAKETLAAGGTVRADD. R127 lines the ATP pocket. Positions 139 and 150 each coordinate AMP. A178 is an ATP binding site.

This sequence belongs to the adenylate kinase family. In terms of assembly, monomer.

It localises to the cytoplasm. The enzyme catalyses AMP + ATP = 2 ADP. It participates in purine metabolism; AMP biosynthesis via salvage pathway; AMP from ADP: step 1/1. Its function is as follows. Catalyzes the reversible transfer of the terminal phosphate group between ATP and AMP. Plays an important role in cellular energy homeostasis and in adenine nucleotide metabolism. The protein is Adenylate kinase of Beijerinckia indica subsp. indica (strain ATCC 9039 / DSM 1715 / NCIMB 8712).